Reading from the N-terminus, the 245-residue chain is MGEVGESEKYLLNRHKEHHFTAGETVRDIIIGFSDGLTVPFALAAGLSGANASSSIILTAGIAEVAAGAISMGLGGYLAAKSEADHYTRELRREQEEIDTIPDTEAAEVAEILAEYGVEPHEYWPVVNSLRKNPKAWLDFMMKFELGLEKPNPRRALQSALTIAISYVLSGLIPLLPYMFIPIAQKAVVSSVIVTIFALLIFGFAKGYFTGNKPVWSALQTALIGAIASAAAFGMAKGCASSVFE.

Residues 1–28 (MGEVGESEKYLLNRHKEHHFTAGETVRD) lie on the Cytoplasmic side of the membrane. The chain crosses the membrane as a helical span at residues 29–49 (IIIGFSDGLTVPFALAAGLSG). Topologically, residues 50-55 (ANASSS) are vacuolar. A helical membrane pass occupies residues 56 to 76 (IILTAGIAEVAAGAISMGLGG). Topologically, residues 77–162 (YLAAKSEADH…PRRALQSALT (86 aa)) are cytoplasmic. The Fe cation site is built by glutamate 94, glutamate 97, glutamate 105, glutamate 108, methionine 141, and glutamate 145. The helical transmembrane segment at 163–183 (IAISYVLSGLIPLLPYMFIPI) threads the bilayer. Topologically, residues 184–186 (AQK) are vacuolar. Residues 187-207 (AVVSSVIVTIFALLIFGFAKG) traverse the membrane as a helical segment. Topologically, residues 208-214 (YFTGNKP) are cytoplasmic. A helical transmembrane segment spans residues 215–235 (VWSALQTALIGAIASAAAFGM). Topologically, residues 236-245 (AKGCASSVFE) are vacuolar.

The protein belongs to the CCC1 family. In terms of tissue distribution, expressed in petal tissues, but not in other parts of the plant, such as leaves, roots, sepals and stems.

It is found in the vacuole membrane. The catalysed reaction is Fe(2+)(in) = Fe(2+)(out). In terms of biological role, vacuolar iron transporter involved in the transfer of iron ions from the cytosol to the vacuole for intracellular iron storage. Plays an essential role in the development of blue coloration in cornflower petals. In Centaurea cyanus (Garden cornflower), this protein is Vacuolar iron transporter.